A 358-amino-acid polypeptide reads, in one-letter code: Peroxisome biogenesis protein 3-1 (358 aa).

A helical membrane pass occupies residues 15 to 32 (ILVTTTCLGSGYLLYKLY). Positions 33 to 62 (NAHTRKLADLERELANERENDEIIKTQMKA) form a coiled coil.

This sequence belongs to the peroxin-3 family.

Its subcellular location is the peroxisome membrane. Its function is as follows. Involved in morphology determination of peroxisomes, but not in import of peroxisomal matrix proteins. May act as a docking factor for PEX19 and be necessary for the import of peroxisomal membrane proteins in the peroxisomes. The polypeptide is Peroxisome biogenesis protein 3-1 (PEX3-1) (Arabidopsis thaliana (Mouse-ear cress)).